The following is a 457-amino-acid chain: Argininosuccinate lyase (457 aa).

It belongs to the lyase 1 family. Argininosuccinate lyase subfamily.

Its subcellular location is the cytoplasm. The enzyme catalyses 2-(N(omega)-L-arginino)succinate = fumarate + L-arginine. It functions in the pathway amino-acid biosynthesis; L-arginine biosynthesis; L-arginine from L-ornithine and carbamoyl phosphate: step 3/3. This is Argininosuccinate lyase from Cronobacter sakazakii (strain ATCC BAA-894) (Enterobacter sakazakii).